Here is a 263-residue protein sequence, read N- to C-terminus: 3-oxo-5-alpha-steroid 4-dehydrogenase 1 (263 aa).

5 helical membrane-spanning segments follow: residues 16–33 (MLAALAYLQCAVGCAVLA), 90–110 (ILLAMFLVHYGHRCLIYPFLM), 115–135 (PMPLLACTMAIMFCTFNGYLQ), 155–175 (FLIGFGLWLAGMLINIHSDHI), and 213–233 (YALASWSVQGAAFAFFTFCFL).

Belongs to the steroid 5-alpha reductase family.

Its subcellular location is the microsome membrane. The protein localises to the endoplasmic reticulum membrane. The catalysed reaction is a 3-oxo-5alpha-steroid + NADP(+) = a 3-oxo-Delta(4)-steroid + NADPH + H(+). The enzyme catalyses 5alpha-pregnane-3,20-dione + NADP(+) = progesterone + NADPH + H(+). It catalyses the reaction 17beta-hydroxy-5alpha-androstan-3-one + NADP(+) = testosterone + NADPH + H(+). It carries out the reaction androst-4-ene-3,17-dione + NADPH + H(+) = 5alpha-androstan-3,17-dione + NADP(+). Its function is as follows. Converts testosterone into 5-alpha-dihydrotestosterone and progesterone or corticosterone into their corresponding 5-alpha-3-oxosteroids. It plays a central role in sexual differentiation and androgen physiology. The sequence is that of 3-oxo-5-alpha-steroid 4-dehydrogenase 1 (SRD5A1) from Macaca fascicularis (Crab-eating macaque).